We begin with the raw amino-acid sequence, 484 residues long: Glutamate--tRNA ligase (484 aa).

Positions Pro-10–Gly-20 match the 'HIGH' region motif. Residues Lys-252–Arg-256 carry the 'KMSKS' region motif. Lys-255 contacts ATP.

It belongs to the class-I aminoacyl-tRNA synthetase family. Glutamate--tRNA ligase type 1 subfamily. As to quaternary structure, monomer.

The protein localises to the cytoplasm. It catalyses the reaction tRNA(Glu) + L-glutamate + ATP = L-glutamyl-tRNA(Glu) + AMP + diphosphate. Its function is as follows. Catalyzes the attachment of glutamate to tRNA(Glu) in a two-step reaction: glutamate is first activated by ATP to form Glu-AMP and then transferred to the acceptor end of tRNA(Glu). The protein is Glutamate--tRNA ligase of Mycoplasma genitalium (strain ATCC 33530 / DSM 19775 / NCTC 10195 / G37) (Mycoplasmoides genitalium).